Reading from the N-terminus, the 55-residue chain is Omega-ctenitoxin-Pr2a (55 aa).

5 cysteine pairs are disulfide-bonded: Cys2-Cys16, Cys9-Cys22, Cys15-Cys37, Cys24-Cys35, and Cys45-Cys52.

In terms of tissue distribution, expressed by the venom gland.

It localises to the secreted. In terms of biological role, antagonist of L-type calcium channels (Cav1/CACNA1). In vivo, causes paralysis in posterior limbs, and gradual decrease in movement and aggression during 24 hours after intracerebroventricular injection in mice at dose levels of 3 ug per mouse. The polypeptide is Omega-ctenitoxin-Pr2a (Phoneutria reidyi (Brazilian Amazonian armed spider)).